Consider the following 362-residue polypeptide: Aminomethyltransferase (362 aa).

It belongs to the GcvT family. As to quaternary structure, the glycine cleavage system is composed of four proteins: P, T, L and H.

The enzyme catalyses N(6)-[(R)-S(8)-aminomethyldihydrolipoyl]-L-lysyl-[protein] + (6S)-5,6,7,8-tetrahydrofolate = N(6)-[(R)-dihydrolipoyl]-L-lysyl-[protein] + (6R)-5,10-methylene-5,6,7,8-tetrahydrofolate + NH4(+). In terms of biological role, the glycine cleavage system catalyzes the degradation of glycine. The sequence is that of Aminomethyltransferase from Listeria innocua serovar 6a (strain ATCC BAA-680 / CLIP 11262).